Reading from the N-terminus, the 273-residue chain is Imidazole glycerol phosphate synthase subunit HisF (273 aa).

Active-site residues include Asp12 and Asp136.

It belongs to the HisA/HisF family. As to quaternary structure, heterodimer of HisH and HisF.

It is found in the cytoplasm. It carries out the reaction 5-[(5-phospho-1-deoxy-D-ribulos-1-ylimino)methylamino]-1-(5-phospho-beta-D-ribosyl)imidazole-4-carboxamide + L-glutamine = D-erythro-1-(imidazol-4-yl)glycerol 3-phosphate + 5-amino-1-(5-phospho-beta-D-ribosyl)imidazole-4-carboxamide + L-glutamate + H(+). The protein operates within amino-acid biosynthesis; L-histidine biosynthesis; L-histidine from 5-phospho-alpha-D-ribose 1-diphosphate: step 5/9. In terms of biological role, IGPS catalyzes the conversion of PRFAR and glutamine to IGP, AICAR and glutamate. The HisF subunit catalyzes the cyclization activity that produces IGP and AICAR from PRFAR using the ammonia provided by the HisH subunit. The polypeptide is Imidazole glycerol phosphate synthase subunit HisF (Halobacterium salinarum (strain ATCC 29341 / DSM 671 / R1)).